A 210-amino-acid polypeptide reads, in one-letter code: Mating-type-like protein A1 (210 aa).

Positions 141–200 (SKKKRQRLDNSTKEFLEKVFEKNKQPNRRERELIAEKHGVSLSQIRVWFTNKRMRKKEPK) form a DNA-binding region, homeobox.

It belongs to the MATA1 family. As to quaternary structure, forms a heterodimer with ALPHA2.

It localises to the nucleus. In terms of biological role, mating type proteins are sequence specific DNA-binding proteins that act as master switches in yeast differentiation by controlling gene expression in a cell type-specific fashion. Transcriptional corepressor that acts in conjunction with ALPHA2 to repress transcription both of homozygote-specific genes and of genes necessary for the white-opaque switch, a prerequisite for mating. This Candida albicans (strain SC5314 / ATCC MYA-2876) (Yeast) protein is Mating-type-like protein A1 (MTLA1).